A 201-amino-acid polypeptide reads, in one-letter code: Diadenylate cyclase CdaS (201 aa).

Positions 54–201 (QTLAATYYIQ…LNGILYTISL (148 aa)) constitute a DAC domain.

The protein belongs to the adenylate cyclase family. DacB/CdaS subfamily. As to quaternary structure, probably forms a homohexamer. Mg(2+) serves as cofactor.

The catalysed reaction is 2 ATP = 3',3'-c-di-AMP + 2 diphosphate. Functionally, one of 3 paralogous diadenylate cyclases (DAC) in this bacteria catalyzing the condensation of 2 ATP molecules into cyclic di-AMP (c-di-AMP). It has slow DAC activity with ADP as a substrate and may have weak ADPase activity. Required for efficient spore formation, whereas in B.subtilis, it is required for efficient spore germination. It is produced under the control of different sigma factors in the two bacteria. It is also required for parasporal crystal formation. This Bacillus thuringiensis (strain BMB171) protein is Diadenylate cyclase CdaS.